Here is a 393-residue protein sequence, read N- to C-terminus: NAD(P)H-quinone oxidoreductase subunit H, chloroplastic (393 aa).

This sequence belongs to the complex I 49 kDa subunit family. As to quaternary structure, NDH is composed of at least 16 different subunits, 5 of which are encoded in the nucleus.

The protein resides in the plastid. It localises to the chloroplast thylakoid membrane. The enzyme catalyses a plastoquinone + NADH + (n+1) H(+)(in) = a plastoquinol + NAD(+) + n H(+)(out). It carries out the reaction a plastoquinone + NADPH + (n+1) H(+)(in) = a plastoquinol + NADP(+) + n H(+)(out). Its function is as follows. NDH shuttles electrons from NAD(P)H:plastoquinone, via FMN and iron-sulfur (Fe-S) centers, to quinones in the photosynthetic chain and possibly in a chloroplast respiratory chain. The immediate electron acceptor for the enzyme in this species is believed to be plastoquinone. Couples the redox reaction to proton translocation, and thus conserves the redox energy in a proton gradient. The polypeptide is NAD(P)H-quinone oxidoreductase subunit H, chloroplastic (Panax ginseng (Korean ginseng)).